The following is a 90-amino-acid chain: Bombyxin D-1 (90 aa).

Positions 1–18 (MKLLGFFLSWVSVCAIVS) are cleaved as a signal peptide. 3 disulfides stabilise this stretch: Cys-27–Cys-77, Cys-39–Cys-90, and Cys-76–Cys-81. A propeptide spans 48–68 (SVAHYAGYGWPLLPSLSEERG) (c peptide like).

The protein belongs to the insulin family. As to quaternary structure, heterodimer of a B chain and an A chain linked by two disulfide bonds.

Its subcellular location is the secreted. Functionally, brain peptide responsible for activation of prothoracic glands to produce ecdysone in insects. The sequence is that of Bombyxin D-1 (BBXD1) from Bombyx mori (Silk moth).